A 267-amino-acid polypeptide reads, in one-letter code: Interleukin-2 receptor subunit alpha (267 aa).

The signal sequence occupies residues 1–21 (MEPHLLMLGFLSFTIVPGCWA). The Sushi 1 domain occupies 22 to 79 (ELCLYDPPEVPNATFKALSYKNGTILNCECKRGFRRLNELVYMACLGNSWSNNCQCTS). The Extracellular segment spans residues 22–235 (ELCLYDPPEV…ETFVFTKEYQ (214 aa)). Disulfide bonds link Cys-24-Cys-66, Cys-49-Cys-75, and Cys-51-Cys-77. Asn-33 and Asn-43 each carry an N-linked (GlcNAc...) asparagine glycan. Residues 82-93 (HDNSREQVTPQP) are compositionally biased toward polar residues. The interval 82-108 (HDNSREQVTPQPEGQKEQQTTDTQKST) is disordered. The segment covering 98–108 (EQQTTDTQKST) has biased composition (low complexity). The Sushi 2 domain occupies 118-181 (GHCREPPPWR…WTHPQLTCVD (64 aa)). 2 disulfide bridges follow: Cys-120–Cys-163 and Cys-147–Cys-179. The tract at residues 191-215 (SEESQGSRNSFPESEASCPTPNTDF) is disordered. Over residues 192–215 (EESQGSRNSFPESEASCPTPNTDF) the composition is skewed to polar residues. The chain crosses the membrane as a helical span at residues 236-256 (VAVASCIFLLLSILLLSGFTW). At 257–267 (QHRWRKSRRTI) the chain is on the cytoplasmic side.

As to quaternary structure, non-covalent dimer of an alpha and a beta subunit. IL2R exists in 3 different forms: a high affinity dimer, an intermediate affinity monomer (beta subunit), and a low affinity monomer (alpha subunit). The high and intermediate affinity forms also associate with a gamma subunit.

The protein resides in the membrane. Functionally, receptor for interleukin-2. The receptor is involved in the regulation of immune tolerance by controlling regulatory T cells (TREGs) activity. TREGs suppress the activation and expansion of autoreactive T-cells. The polypeptide is Interleukin-2 receptor subunit alpha (Il2ra) (Rattus norvegicus (Rat)).